The primary structure comprises 329 residues: MQGSVTEFLKPHLVNIEQVSSTHAKVTLEPLERGFGHTLGNALRRILLSSMPGCAVTEVEIDGVLHEYSSKEGVQEDILEVLLNLKGLAVKVSGKDDIILTLNKSGIGPVTAADITHDGDVEIVNPHHVICHLTDKDASISMRIRVQRGRGYVPASARVHSQDEDRPIGRLLVDARFSPVDRIAYNVESARVEQRTDLDKLIIEMETNGTIDPEEAIRRAATILAEQLDAFVDLRDVRQPEVKEEKPEFDPILLRPVDDLELTVRSHNCLKAETIHYICDLVQRTEVELLKTPNLGKKSLTEIKDVLASRGLSLGMRLENWPPASIAED.

The interval 1 to 235 (MQGSVTEFLK…EQLDAFVDLR (235 aa)) is alpha N-terminal domain (alpha-NTD). Residues 249 to 329 (FDPILLRPVD…NWPPASIAED (81 aa)) form an alpha C-terminal domain (alpha-CTD) region.

This sequence belongs to the RNA polymerase alpha chain family. In terms of assembly, homodimer. The RNAP catalytic core consists of 2 alpha, 1 beta, 1 beta' and 1 omega subunit. When a sigma factor is associated with the core the holoenzyme is formed, which can initiate transcription.

The enzyme catalyses RNA(n) + a ribonucleoside 5'-triphosphate = RNA(n+1) + diphosphate. Functionally, DNA-dependent RNA polymerase catalyzes the transcription of DNA into RNA using the four ribonucleoside triphosphates as substrates. The protein is DNA-directed RNA polymerase subunit alpha of Actinobacillus pleuropneumoniae serotype 5b (strain L20).